Consider the following 750-residue polypeptide: Photosystem I P700 chlorophyll a apoprotein A1 (750 aa).

8 helical membrane passes run 70 to 93, 156 to 179, 195 to 219, 291 to 309, 346 to 369, 385 to 411, 433 to 455, and 531 to 549; these read VFSA…FHGA, LYST…FHYH, LNHH…HVSL, TAHH…GHMY, WHAQ…HHMY, LSLF…IFMV, AIIS…LYIH, and FLVH…LILL. Residues Cys-573 and Cys-582 each contribute to the [4Fe-4S] cluster site. A run of 2 helical transmembrane segments spans residues 589–610 and 664–686; these read HVFL…HFSW and LSAY…MFLF. Residue His-675 participates in chlorophyll a' binding. Positions 683 and 691 each coordinate chlorophyll a. Residue Trp-692 coordinates phylloquinone. A helical membrane pass occupies residues 724-744; the sequence is AVGVAHYLLGGIATTWAFFLA.

It belongs to the PsaA/PsaB family. In terms of assembly, the PsaA/B heterodimer binds the P700 chlorophyll special pair and subsequent electron acceptors. PSI consists of a core antenna complex that captures photons, and an electron transfer chain that converts photonic excitation into a charge separation. The eukaryotic PSI reaction center is composed of at least 11 subunits. The cofactor is P700 is a chlorophyll a/chlorophyll a' dimer, A0 is one or more chlorophyll a, A1 is one or both phylloquinones and FX is a shared 4Fe-4S iron-sulfur center..

The protein localises to the plastid. Its subcellular location is the chloroplast thylakoid membrane. The enzyme catalyses reduced [plastocyanin] + hnu + oxidized [2Fe-2S]-[ferredoxin] = oxidized [plastocyanin] + reduced [2Fe-2S]-[ferredoxin]. In terms of biological role, psaA and PsaB bind P700, the primary electron donor of photosystem I (PSI), as well as the electron acceptors A0, A1 and FX. PSI is a plastocyanin-ferredoxin oxidoreductase, converting photonic excitation into a charge separation, which transfers an electron from the donor P700 chlorophyll pair to the spectroscopically characterized acceptors A0, A1, FX, FA and FB in turn. Oxidized P700 is reduced on the lumenal side of the thylakoid membrane by plastocyanin. The protein is Photosystem I P700 chlorophyll a apoprotein A1 of Marchantia polymorpha (Common liverwort).